Here is a 273-residue protein sequence, read N- to C-terminus: Glucosamine-6-phosphate deaminase (273 aa).

Aspartate 72 (proton acceptor; for enolization step) is an active-site residue. The For ring-opening step role is filled by aspartate 141. Histidine 143 acts as the Proton acceptor; for ring-opening step in catalysis. The active-site For ring-opening step is the glutamate 148.

The protein belongs to the glucosamine/galactosamine-6-phosphate isomerase family. In terms of assembly, homohexamer.

It is found in the cytoplasm. It carries out the reaction alpha-D-glucosamine 6-phosphate + H2O = beta-D-fructose 6-phosphate + NH4(+). It participates in nucleotide-sugar biosynthesis; UDP-N-acetyl-alpha-D-glucosamine biosynthesis; alpha-D-glucosamine 6-phosphate from D-fructose 6-phosphate: step 1/1. Catalyzes the reversible conversion of alpha-D-glucosamine 6-phosphate (GlcN-6P) into beta-D-fructose 6-phosphate (Fru-6P) and ammonium ion, a regulatory reaction step in de novo uridine diphosphate-N-acetyl-alpha-D-glucosamine (UDP-GlcNAc) biosynthesis via hexosamine pathway. The polypeptide is Glucosamine-6-phosphate deaminase (Drosophila melanogaster (Fruit fly)).